A 589-amino-acid polypeptide reads, in one-letter code: Delta-like protein 3 (589 aa).

The signal sequence occupies residues 1–32 (MVSLQVSSLPQTLILAFLLPQALPAGVFELQI). At 33–494 (HSFGPGPGPG…LRQADSQRFL (462 aa)) the chain is on the extracellular side. The 40-residue stretch at 174–213 (ARCEPPAVGAACARLCRSRSAPSRCGPGLRPCTPFPDECE) folds into the DSL domain. EGF-like domains follow at residues 218–251 (SLTV…PLCT), 276–312 (GPGP…PRCE), 314–353 (SGVT…SNCE), 355–391 (RVDR…PRCE), 393–429 (DLDD…RDCR), and 431–467 (RADP…VRCE). Cystine bridges form between Cys222/Cys233, Cys226/Cys239, Cys241/Cys250, Cys280/Cys291, Cys285/Cys300, Cys302/Cys311, Cys318/Cys329, Cys323/Cys341, Cys343/Cys352, Cys359/Cys370, Cys364/Cys379, Cys381/Cys390, Cys397/Cys408, Cys402/Cys417, Cys419/Cys428, Cys435/Cys446, Cys440/Cys455, and Cys457/Cys466. Residues 495–515 (LPPALGLLAAAALAGAALLLI) form a helical membrane-spanning segment. At 516-589 (HVRRRGPGRD…PAPSIYAREA (74 aa)) the chain is on the cytoplasmic side. A disordered region spans residues 552–574 (QDGAGDGPTSSADWNHPEDGDSR).

In terms of assembly, can bind and activate Notch-1 or another Notch receptor. Ubiquitinated by MIB (MIB1 or MIB2), leading to its endocytosis and subsequent degradation.

It is found in the membrane. Inhibits primary neurogenesis. May be required to divert neurons along a specific differentiation pathway. Plays a role in the formation of somite boundaries during segmentation of the paraxial mesoderm. The chain is Delta-like protein 3 (Dll3) from Rattus norvegicus (Rat).